The following is a 715-amino-acid chain: Fatty acid oxidation complex subunit alpha (715 aa).

Positions 1–194 (MHEQRAKPSA…RLGLVDDAVP (194 aa)) are enoyl-CoA hydratase. A 3-hydroxyacyl-CoA dehydrogenase region spans residues 310-715 (HALHRIGILG…QGERFYPQGS (406 aa)).

In the N-terminal section; belongs to the enoyl-CoA hydratase/isomerase family. The protein in the central section; belongs to the 3-hydroxyacyl-CoA dehydrogenase family. In terms of assembly, heterotetramer of two alpha chains (FadJ) and two beta chains (FadI).

The protein localises to the cytoplasm. It catalyses the reaction a (3S)-3-hydroxyacyl-CoA = a (2E)-enoyl-CoA + H2O. The enzyme catalyses a 4-saturated-(3S)-3-hydroxyacyl-CoA = a (3E)-enoyl-CoA + H2O. It carries out the reaction a (3S)-3-hydroxyacyl-CoA + NAD(+) = a 3-oxoacyl-CoA + NADH + H(+). The catalysed reaction is (3S)-3-hydroxybutanoyl-CoA = (3R)-3-hydroxybutanoyl-CoA. It participates in lipid metabolism; fatty acid beta-oxidation. Its function is as follows. Catalyzes the formation of a hydroxyacyl-CoA by addition of water on enoyl-CoA. Also exhibits 3-hydroxyacyl-CoA epimerase and 3-hydroxyacyl-CoA dehydrogenase activities. In Serratia proteamaculans (strain 568), this protein is Fatty acid oxidation complex subunit alpha.